The primary structure comprises 319 residues: ATP-dependent 6-phosphofructokinase (319 aa).

ATP is bound at residue Gly11. 21–25 (RAVVR) serves as a coordination point for ADP. Residues 72-73 (RC) and 102-105 (GDGS) each bind ATP. Asp103 is a Mg(2+) binding site. 125-127 (TID) provides a ligand contact to substrate. Asp127 functions as the Proton acceptor in the catalytic mechanism. Arg154 is a binding site for ADP. Substrate is bound by residues Arg162 and 169-171 (MGR). ADP is bound by residues 185 to 187 (GAE), Arg211, and 213 to 215 (KKH). Substrate-binding positions include Glu222, Arg243, and 249–252 (HVQR).

This sequence belongs to the phosphofructokinase type A (PFKA) family. ATP-dependent PFK group I subfamily. Prokaryotic clade 'B1' sub-subfamily. As to quaternary structure, homotetramer. Requires Mg(2+) as cofactor.

It localises to the cytoplasm. The catalysed reaction is beta-D-fructose 6-phosphate + ATP = beta-D-fructose 1,6-bisphosphate + ADP + H(+). It participates in carbohydrate degradation; glycolysis; D-glyceraldehyde 3-phosphate and glycerone phosphate from D-glucose: step 3/4. With respect to regulation, allosterically activated by ADP and other diphosphonucleosides, and allosterically inhibited by phosphoenolpyruvate. Its function is as follows. Catalyzes the phosphorylation of D-fructose 6-phosphate to fructose 1,6-bisphosphate by ATP, the first committing step of glycolysis. This Bacillus anthracis (strain A0248) protein is ATP-dependent 6-phosphofructokinase.